Consider the following 432-residue polypeptide: UPF0597 protein APJL_1638 (432 aa).

This sequence belongs to the UPF0597 family.

The polypeptide is UPF0597 protein APJL_1638 (Actinobacillus pleuropneumoniae serotype 3 (strain JL03)).